Here is a 94-residue protein sequence, read N- to C-terminus: Ribonuclease VapC3 (94 aa).

A Mg(2+)-binding site is contributed by Asp-6.

Belongs to the PINc/VapC protein family. Mg(2+) is required as a cofactor.

Functionally, toxic component of a type II toxin-antitoxin (TA) system. An RNase. Its cognate antitoxin is VapB3. The sequence is that of Ribonuclease VapC3 (vapC3) from Methanocaldococcus jannaschii (strain ATCC 43067 / DSM 2661 / JAL-1 / JCM 10045 / NBRC 100440) (Methanococcus jannaschii).